The sequence spans 113 residues: Putative insulin-like growth factor 2-associated protein (113 aa).

Expressed in fetal and adult liver.

This Homo sapiens (Human) protein is Putative insulin-like growth factor 2-associated protein.